We begin with the raw amino-acid sequence, 661 residues long: MSNIDFKALERAANETRGLSMDAVAKAASGHLGLPLGSAEIGAALFGNSLIYNPKDTRWLNRDYFVLSAGHGSMFLYSWLHLSGYDVSIEDIKNFRQLNSKTPGHPKFHDTPGVEATTGPLGQGIANAVGIASACKMAAGKFNTEQHQIFNQKVVVLVGDGCLQEGISQEAISFAGHHRLDNLIVFYDSNDVTLDAMAIETQSEDAVKRFESVGFEVQLVLEGNNIGSLINAYQNAKHSKSGKPQIIICKTTIAKGIPEVAGTNKGHGEAGVKFIDSARKNLGLPEEKFFVSGETRQYFEQHEKQLEKLYQEWQATFAEWKSANPKLAQLLESAHEKHEAIDIMKQIPEFPTTPIIATRKAGSDVLQPISQYLPLSVSGSADLHGSTLNYIKEGRDFTPACPTGRNIKFGIREHAMGAMMNGIAYHGLFKVSGATFLVFSDYLRPAIRLAALSHLPVVYIFTHDSVGVGEDGPTHQPVETVSGLRMIPNLDVIRPADPEETAAAFSLAYARADGPTLLSLTRQNLPFLPGTAQKKREGTLRGGYIVVSETAPLRMILIATGSEVQHCVEAAKLLGDDIRVVSMPCTELFDRQSNEYKQSVLPSGCRNRIAMEAGVTSFWYKYVGLDGKVIGIDRFGMSAPGNAVMKQLGMTSENLVNISKQ.

S2 is subject to N-acetylserine. H31 contacts substrate. Residues H71 and 119–121 (GPL) contribute to the thiamine diphosphate site. Position 160 (D160) interacts with Mg(2+). G161 and N190 together coordinate thiamine diphosphate. 2 residues coordinate Mg(2+): N190 and V192. Positions 267, 359, and 386 each coordinate substrate. Position 267 (H267) interacts with thiamine diphosphate. The Proton donor role is filled by E413. Thiamine diphosphate is bound at residue F439. Residues H463, D471, and R522 each contribute to the substrate site.

It belongs to the transketolase family. As to quaternary structure, homodimer. Mg(2+) is required as a cofactor. The cofactor is Ca(2+). Mn(2+) serves as cofactor. It depends on Co(2+) as a cofactor. Requires thiamine diphosphate as cofactor.

It carries out the reaction D-sedoheptulose 7-phosphate + D-glyceraldehyde 3-phosphate = aldehydo-D-ribose 5-phosphate + D-xylulose 5-phosphate. Catalyzes the transfer of a two-carbon ketol group from a ketose donor to an aldose acceptor, via a covalent intermediate with the cofactor thiamine pyrophosphate. The polypeptide is Transketolase (tkt-1) (Dictyostelium discoideum (Social amoeba)).